Reading from the N-terminus, the 51-residue chain is Large ribosomal subunit protein bL33 (51 aa).

The protein belongs to the bacterial ribosomal protein bL33 family. In terms of assembly, part of the 50S ribosomal subunit. Cross-links to the P and E site tRNAs.

The protein is Large ribosomal subunit protein bL33 of Pseudomonas aeruginosa (strain ATCC 15692 / DSM 22644 / CIP 104116 / JCM 14847 / LMG 12228 / 1C / PRS 101 / PAO1).